A 158-amino-acid chain; its full sequence is Transcriptional repressor NrdR (158 aa).

A zinc finger spans residues 3–34; sequence CPYCGYPDSKVIDSRPTDDNTSIRRRRECLKC. The 91-residue stretch at 49-139 folds into the ATP-cone domain; sequence ILVIKKDNRR…VYRQFKDINT (91 aa).

This sequence belongs to the NrdR family. Requires Zn(2+) as cofactor.

Functionally, negatively regulates transcription of bacterial ribonucleotide reductase nrd genes and operons by binding to NrdR-boxes. In Thermoanaerobacter pseudethanolicus (strain ATCC 33223 / 39E) (Clostridium thermohydrosulfuricum), this protein is Transcriptional repressor NrdR.